The following is a 205-amino-acid chain: MSTVYTRPLARLIEQLQRLPGVGPKTAQRLALHLLKRPDSEVQALAQALLEAKQQVGLCSVCFHLSAEPVCEVCRAPSRDEGTLCVVADSRDVIALEKTREYHGKYHVLGGLISPMEGIGPEQLHIQPLIQRVSQTAVEEVIMAISPSIEGETTTLYIAQLLKPLTKLKGAKVTRIAFGLPMGGDLEYADEVTLARALEGRRELD.

Residues 59–74 (CSVCFHLSAEPVCEVC) form a C4-type zinc finger. A Toprim domain is found at 82-181 (GTLCVVADSR…KVTRIAFGLP (100 aa)).

This sequence belongs to the RecR family.

May play a role in DNA repair. It seems to be involved in an RecBC-independent recombinational process of DNA repair. It may act with RecF and RecO. This Cyanothece sp. (strain PCC 7425 / ATCC 29141) protein is Recombination protein RecR.